We begin with the raw amino-acid sequence, 82 residues long: Large ribosomal subunit protein bL31B (82 aa).

The protein belongs to the bacterial ribosomal protein bL31 family. Type B subfamily. As to quaternary structure, part of the 50S ribosomal subunit.

The sequence is that of Large ribosomal subunit protein bL31B from Pectobacterium atrosepticum (strain SCRI 1043 / ATCC BAA-672) (Erwinia carotovora subsp. atroseptica).